The chain runs to 3546 residues: Ubiquitin carboxyl-terminal hydrolase 34 (3546 aa).

Phosphoserine occurs at positions 352, 486, 487, and 490. Disordered regions lie at residues 502-535, 550-679, and 1459-1478; these read KEEE…SGGS, VQQR…VFNT, and TGSY…DQVE. A compositionally biased stretch (low complexity) spans 511-524; that stretch reads APSPWSPAASPQSS. Polar residues-rich tracts occupy residues 525 to 534 and 560 to 570; these read DNSDTHQSGG and SMQGSSDETAN. Low complexity predominate over residues 571–590; the sequence is SGEDGSSGPGSSSGHSDGSS. Positions 591 to 609 are enriched in polar residues; sequence NEVNSSHASQSAGSPGSEV. Residues 610-627 are compositionally biased toward acidic residues; sequence QSEDIADIEALKEEDEDD. Ser649 is modified (phosphoserine). Residues 659–671 show a composition bias toward polar residues; the sequence is QGMSERNGTSSGT. Positions 1467-1477 are enriched in acidic residues; it reads PDSDDSSEDQV. Ser1469 is subject to Phosphoserine. The USP domain occupies 1894–2239; it reads VGLTNLGATC…SAYMLFYKRM (346 aa). The active-site Nucleophile is Cys1903. His2164 functions as the Proton acceptor in the catalytic mechanism. Position 2488 is a phosphoserine (Ser2488). The disordered stretch occupies residues 3331–3443; the sequence is NSLQEQEAKE…HAEEQSNNGR (113 aa). Residues 3336–3347 are compositionally biased toward basic and acidic residues; that stretch reads QEAKERKTKDDE. Ser3358 and Ser3359 each carry phosphoserine. Phosphothreonine is present on Thr3381. A phosphoserine mark is found at Ser3386 and Ser3406. A compositionally biased stretch (polar residues) spans 3421–3432; it reads SSFSEDMSNIRS. Over residues 3433–3443 the composition is skewed to basic and acidic residues; sequence QHAEEQSNNGR. Position 3503 is a phosphoserine (Ser3503).

This sequence belongs to the peptidase C19 family. As to quaternary structure, interacts with AXIN1 and AXIN2. In terms of tissue distribution, expressed in brain at low level.

It catalyses the reaction Thiol-dependent hydrolysis of ester, thioester, amide, peptide and isopeptide bonds formed by the C-terminal Gly of ubiquitin (a 76-residue protein attached to proteins as an intracellular targeting signal).. Ubiquitin hydrolase that can remove conjugated ubiquitin from AXIN1 and AXIN2, thereby acting as a regulator of Wnt signaling pathway. Acts as an activator of the Wnt signaling pathway downstream of the beta-catenin destruction complex by deubiquitinating and stabilizing AXIN1 and AXIN2, leading to promote nuclear accumulation of AXIN1 and AXIN2 and positively regulate beta-catenin (CTNBB1)-mediated transcription. Recognizes and hydrolyzes the peptide bond at the C-terminal Gly of ubiquitin. Involved in the processing of poly-ubiquitin precursors as well as that of ubiquitinated proteins. This is Ubiquitin carboxyl-terminal hydrolase 34 (USP34) from Homo sapiens (Human).